The following is a 96-amino-acid chain: Co-chaperonin GroES (96 aa).

This sequence belongs to the GroES chaperonin family. Heptamer of 7 subunits arranged in a ring. Interacts with the chaperonin GroEL.

The protein localises to the cytoplasm. In terms of biological role, together with the chaperonin GroEL, plays an essential role in assisting protein folding. The GroEL-GroES system forms a nano-cage that allows encapsulation of the non-native substrate proteins and provides a physical environment optimized to promote and accelerate protein folding. GroES binds to the apical surface of the GroEL ring, thereby capping the opening of the GroEL channel. The sequence is that of Co-chaperonin GroES from Acidithiobacillus ferrooxidans (strain ATCC 23270 / DSM 14882 / CIP 104768 / NCIMB 8455) (Ferrobacillus ferrooxidans (strain ATCC 23270)).